We begin with the raw amino-acid sequence, 344 residues long: Follistatin (344 aa).

The N-terminal stretch at 1–29 (MVRPRHQPGGLCLLLLLLCQFMEDRSAQA) is a signal peptide. Residues 30–103 (GNCWLRQAKN…TCDNVDCGPG (74 aa)) enclose the TB domain. Disulfide bonds link C32-C55, C42-C88, C56-C91, C95-C106, C100-C116, C118-C150, C122-C143, C132-C164, C168-C179, C173-C189, C192-C225, C196-C218, C207-C239, C245-C256, C250-C267, C270-C302, C274-C295, and C284-C316. Positions 94-117 (TCDNVDCGPGKKCRMNKKNKPRCV) constitute a Follistatin-like 1 domain. Positions 112-166 (NKPRCVCAPDCSNITWKGPVCGLDGKTYRNECALLKARCKEQPELEVQYQGKCKK) constitute a Kazal-like 1 domain. An N-linked (GlcNAc...) asparagine glycan is attached at N124. The region spanning 167-190 (TCRDVNCPGSSTCVVDQTNNAYCV) is the Follistatin-like 2 domain. A Kazal-like 2 domain is found at 186-241 (NAYCVTCNRICPEPTSSEQYLCGNDGVTYSSACHLRKATCLLGRSIGLAYEGKCIK). The Follistatin-like 3 domain occupies 244–268 (SCEDIQCTGGKKCLWDFKVGRGRCS). Residues 264-318 (RGRCSLCDELCPDSKSEEPVCASDNATYASECAMKEAACSSGVLLEVKHSGSCNS) enclose the Kazal-like 3 domain. N288 is a glycosylation site (N-linked (GlcNAc...) asparagine). The disordered stretch occupies residues 314–344 (GSCNSISEDTEEEEEDEDQDYSFPISSILEW). Positions 321–333 (EDTEEEEEDEDQD) are enriched in acidic residues.

In terms of assembly, interacts with GDF11. Interacts with activin A/INHBA. Interacts with myostatin/MSTN.

It localises to the secreted. The protein localises to the nucleus. Its subcellular location is the nucleolus. In terms of biological role, multifunctional regulatory protein whose primary function is to antagonize members of the transforming growth factor beta (TGF-beta) superfamily including activin, myostatin, GDF11 or bone morphogenetic proteins (BMPs). Mechanistically, binds to these ligands in the extracellular space, blocking their type II receptor-binding site to inhibit downstream signaling. Plays an essential role in muscle fiber formation and growth both by preventing the repressive effects of myostatin and through SMAD3/AKT/mTOR signaling independently of myostatin. Also promotes neural differentiation by antagonizing the action BMP4. Acts as a specific inhibitor of the biosynthesis and secretion of pituitary follicle stimulating hormone (FSH) by sequestering activin A/INHBA. On the other hand, translocates into the nucleus where it down-regulates rRNA synthesis and ribosome biogenesis to maintain cellular energy homeostasis by binding to rDNA. The polypeptide is Follistatin (Equus caballus (Horse)).